A 306-amino-acid polypeptide reads, in one-letter code: MTDKIAVLLGGTSAEREVSLNSGAAVLAGLREGGIDAYPVDPKEVDVTQLKSMGFQKVFIALHGRGGEDGTLQGMLELMGLPYTGSGVMASALSIDKLRSKLLWQGAGLPVAPWVALTRAEFEKGLSDKQLAEISALGLPVIVKPSREGSSVGMSKVVAENALQDALRLAFQHDEEVLIEKWLSGPEFTVAILGEEILPSIRIQPSGTFYDYEAKYLSDETQYFCPAGLEASQEANLQALVLKAWTTLGCKGWGRIDVMLDSDGQFYLLEANTSPGMTSHSLVPMAARQAGMSFSQLVVRILELAD.

In terms of domain architecture, ATP-grasp spans 101–303; the sequence is KLLWQGAGLP…FSQLVVRILE (203 aa). Residue 134–189 participates in ATP binding; that stretch reads ISALGLPVIVKPSREGSSVGMSKVVAENALQDALRLAFQHDEEVLIEKWLSGPEFT. Mg(2+) is bound by residues Asp-257, Glu-270, and Asn-272.

The protein belongs to the D-alanine--D-alanine ligase family. Mg(2+) serves as cofactor. It depends on Mn(2+) as a cofactor.

It localises to the cytoplasm. The catalysed reaction is 2 D-alanine + ATP = D-alanyl-D-alanine + ADP + phosphate + H(+). It functions in the pathway cell wall biogenesis; peptidoglycan biosynthesis. Cell wall formation. This chain is D-alanine--D-alanine ligase B, found in Shigella flexneri.